We begin with the raw amino-acid sequence, 420 residues long: Transcriptional adapter 2-beta (420 aa).

The segment at 4–59 (LSKKYCVYCLADVTSLRLRCTECQDIELCTDCFSAGAEIGNHRRWHGYQLVDGGRF) adopts a ZZ-type zinc-finger fold. Zn(2+) contacts are provided by C9, C12, C23, C26, C32, C35, H45, and H49. The region spanning 65-118 (EAEGGWTSREEQLLLDAIEQFGFGNWEDMAAHVGASRTPTEVMEHYVTMYIHGN) is the SANT domain. Residues 303–333 (EESAEYEAARHKREKRKENKNIANSKRGRED) form a disordered region.

It localises to the nucleus. Functionally, transcriptional coactivator. The protein is Transcriptional adapter 2-beta (tada2b) of Xenopus laevis (African clawed frog).